The following is a 283-amino-acid chain: ATP phosphoribosyltransferase (283 aa).

It belongs to the ATP phosphoribosyltransferase family. Long subfamily. It depends on Mg(2+) as a cofactor.

It localises to the cytoplasm. It carries out the reaction 1-(5-phospho-beta-D-ribosyl)-ATP + diphosphate = 5-phospho-alpha-D-ribose 1-diphosphate + ATP. It functions in the pathway amino-acid biosynthesis; L-histidine biosynthesis; L-histidine from 5-phospho-alpha-D-ribose 1-diphosphate: step 1/9. With respect to regulation, feedback inhibited by histidine. In terms of biological role, catalyzes the condensation of ATP and 5-phosphoribose 1-diphosphate to form N'-(5'-phosphoribosyl)-ATP (PR-ATP). Has a crucial role in the pathway because the rate of histidine biosynthesis seems to be controlled primarily by regulation of HisG enzymatic activity. The polypeptide is ATP phosphoribosyltransferase (Phocaeicola vulgatus (strain ATCC 8482 / DSM 1447 / JCM 5826 / CCUG 4940 / NBRC 14291 / NCTC 11154) (Bacteroides vulgatus)).